The following is a 317-amino-acid chain: NADH-quinone oxidoreductase subunit H 1 (317 aa).

Transmembrane regions (helical) follow at residues 7–27 (IWVN…MLSW), 74–94 (AVFV…FAVV), 107–127 (IGVL…VLGG), 147–167 (LSYE…AGSF), 179–199 (LWFC…GIAE), 230–250 (FFIG…TLFF), 257–277 (VLPP…CFVL), and 297–317 (VMLP…LSVA).

It belongs to the complex I subunit 1 family. NDH-1 is composed of 14 different subunits. Subunits NuoA, H, J, K, L, M, N constitute the membrane sector of the complex.

Its subcellular location is the cell inner membrane. It carries out the reaction a quinone + NADH + 5 H(+)(in) = a quinol + NAD(+) + 4 H(+)(out). NDH-1 shuttles electrons from NADH, via FMN and iron-sulfur (Fe-S) centers, to quinones in the respiratory chain. The immediate electron acceptor for the enzyme in this species is believed to be ubiquinone. Couples the redox reaction to proton translocation (for every two electrons transferred, four hydrogen ions are translocated across the cytoplasmic membrane), and thus conserves the redox energy in a proton gradient. This subunit may bind ubiquinone. This is NADH-quinone oxidoreductase subunit H 1 from Nitrosospira multiformis (strain ATCC 25196 / NCIMB 11849 / C 71).